Here is a 347-residue protein sequence, read N- to C-terminus: Haptoglobin (347 aa).

Positions 1 to 18 (MSDLGAVVALLLWGQLFA) are cleaved as a signal peptide. One can recognise a Sushi domain in the interval 31 to 88 (DGCPKPPMIANGYVEHLVRYQCKNYYRLRTEGDGVYTLNNEKQWTNKAVGDKLPECEA). 2 cysteine pairs are disulfide-bonded: cysteine 52-cysteine 86 and cysteine 90-cysteine 207. A serine protease region spans residues 103-347 (ILGGHLDAKG…DWVQKTIAEN (245 aa)). Asparagine 125, asparagine 148, asparagine 152, asparagine 182, and asparagine 232 each carry an N-linked (GlcNAc...) asparagine glycan. 2 cysteine pairs are disulfide-bonded: cysteine 250-cysteine 281 and cysteine 292-cysteine 322. The interval 259–264 (VPEKKT) is interaction with CD163.

The protein belongs to the peptidase S1 family. Tetramer of two alpha and two beta chains; disulfide-linked. The hemoglobin/haptoglobin complex is composed of a haptoglobin dimer bound to two hemoglobin alpha-beta dimers. Interacts with CD163. Interacts with ERGIC3. As to expression, expressed by the liver and secreted in plasma.

The protein resides in the secreted. As a result of hemolysis, hemoglobin is found to accumulate in the kidney and is secreted in the urine. Haptoglobin captures, and combines with free plasma hemoglobin to allow hepatic recycling of heme iron and to prevent kidney damage. Haptoglobin also acts as an antioxidant, has antibacterial activity and plays a role in modulating many aspects of the acute phase response. Hemoglobin/haptoglobin complexes are rapidly cleared by the macrophage CD163 scavenger receptor expressed on the surface of liver Kupfer cells through an endocytic lysosomal degradation pathway. This chain is Haptoglobin (HP), found in Papio hamadryas (Hamadryas baboon).